The following is a 180-amino-acid chain: Cytokinin-beta-glucosidase 1 (180 aa).

In terms of biological role, hydrolyzes cytokinin glucosides thus liberating free cytokinins. The polypeptide is Cytokinin-beta-glucosidase 1 (ROLC1) (Panax ginseng (Korean ginseng)).